The following is a 189-amino-acid chain: GTP cyclohydrolase 1 (189 aa).

Zn(2+) contacts are provided by Cys79, His82, and Cys150.

The protein belongs to the GTP cyclohydrolase I family. In terms of assembly, toroid-shaped homodecamer, composed of two pentamers of five dimers.

The enzyme catalyses GTP + H2O = 7,8-dihydroneopterin 3'-triphosphate + formate + H(+). It participates in cofactor biosynthesis; 7,8-dihydroneopterin triphosphate biosynthesis; 7,8-dihydroneopterin triphosphate from GTP: step 1/1. This is GTP cyclohydrolase 1 from Rickettsia massiliae (strain Mtu5).